The following is a 121-amino-acid chain: Large ribosomal subunit protein bL12 (121 aa).

It belongs to the bacterial ribosomal protein bL12 family. In terms of assembly, homodimer. Part of the ribosomal stalk of the 50S ribosomal subunit. Forms a multimeric L10(L12)X complex, where L10 forms an elongated spine to which 2 to 4 L12 dimers bind in a sequential fashion. Binds GTP-bound translation factors.

Forms part of the ribosomal stalk which helps the ribosome interact with GTP-bound translation factors. Is thus essential for accurate translation. The polypeptide is Large ribosomal subunit protein bL12 (Limosilactobacillus reuteri (strain DSM 20016) (Lactobacillus reuteri)).